Consider the following 370-residue polypeptide: Putative F-box protein At3g10430 (370 aa).

Residues 1 to 47 form the F-box domain; the sequence is MGSSLPFDLILEILQRTPAESLLRFKSTCKKWYELISNDKRFMYKHL.

This is Putative F-box protein At3g10430 from Arabidopsis thaliana (Mouse-ear cress).